Here is a 698-residue protein sequence, read N- to C-terminus: Pentatricopeptide repeat-containing protein 1, mitochondrial (698 aa).

Positions 49–88 (SSSQLPLGQERQENTGSLGSDPSHSNSTATQEEDEEESFG) are disordered. Positions 62-78 (NTGSLGSDPSHSNSTAT) are enriched in polar residues. PPR repeat units lie at residues 133–169 (TPYWYFLQCKRLIKEGKLVEALDLFERQMLKEERLQP), 170–204 (MESNYTALIGGCGRVGYLKKAFSLYNQMKKRDLEP), 205–243 (SDATYTALFNVCAESPWKDSALQSALKLRQQLQAKNFEL), 244–278 (NLKTYHALLKMAAKCADLRMCLDVFKEIIHKGHVV), 279–315 (TEETFSFLLMGCIQDKKTGFRYALQVWRLMLSLGLQP), and 316–352 (SRDSYNLLLVAARDCGLGDPQVASELLLKPREEATVL). A disordered region spans residues 392-419 (QALGPPEPPEARVPSKAQPEVDTKAEPS). PPR repeat units lie at residues 517 to 551 (DLTFFNTLVRKKSKLGDLEGAKALLPVLAKRGLVP), 552 to 583 (NLQTFCNLAIGCHRPKDGLQLLTDMKKSQVTP), and 584 to 618 (NSHIYSALINAAVRKLNYTYLINILKDMKQNRVPV). The segment at 670 to 698 (HPWQKFRTKPQEDQDTRKEADDGCALGGR) is disordered. A compositionally biased stretch (basic and acidic residues) spans 678-690 (KPQEDQDTRKEAD).

This sequence belongs to the PTCD1 family. Associates with mitochondrial leucine tRNAs. Interacts with ELAC2.

The protein resides in the mitochondrion. Its subcellular location is the mitochondrion matrix. In terms of biological role, mitochondrial protein implicated in negative regulation of leucine tRNA levels, as well as negative regulation of mitochondria-encoded proteins and COX activity. Also affects the 3'-processing of mitochondrial tRNAs. This Pongo abelii (Sumatran orangutan) protein is Pentatricopeptide repeat-containing protein 1, mitochondrial (PTCD1).